We begin with the raw amino-acid sequence, 21 residues long: Formate ester dehydrogenase beta chain (21 aa).

As to quaternary structure, heterotrimer composed of an alpha, a beta and a gamma chain.

This chain is Formate ester dehydrogenase beta chain, found in Amycolatopsis methanolica.